A 357-amino-acid polypeptide reads, in one-letter code: Chorismate synthase (357 aa).

Arg-47 is a binding site for NADP(+). FMN contacts are provided by residues 123-125 (RAS), Gly-281, 296-300 (KPTSS), and Arg-324.

This sequence belongs to the chorismate synthase family. Homotetramer. The cofactor is FMNH2.

The enzyme catalyses 5-O-(1-carboxyvinyl)-3-phosphoshikimate = chorismate + phosphate. Its pathway is metabolic intermediate biosynthesis; chorismate biosynthesis; chorismate from D-erythrose 4-phosphate and phosphoenolpyruvate: step 7/7. Catalyzes the anti-1,4-elimination of the C-3 phosphate and the C-6 proR hydrogen from 5-enolpyruvylshikimate-3-phosphate (EPSP) to yield chorismate, which is the branch point compound that serves as the starting substrate for the three terminal pathways of aromatic amino acid biosynthesis. This reaction introduces a second double bond into the aromatic ring system. This chain is Chorismate synthase, found in Chlamydia trachomatis serovar D (strain ATCC VR-885 / DSM 19411 / UW-3/Cx).